Consider the following 388-residue polypeptide: Chorismate synthase (388 aa).

2 residues coordinate NADP(+): Arg39 and Arg45. FMN is bound by residues 130–132 (RSS), 251–252 (NA), Gly296, 311–315 (KPIPT), and Arg337.

The protein belongs to the chorismate synthase family. In terms of assembly, homotetramer. It depends on FMNH2 as a cofactor.

It catalyses the reaction 5-O-(1-carboxyvinyl)-3-phosphoshikimate = chorismate + phosphate. The protein operates within metabolic intermediate biosynthesis; chorismate biosynthesis; chorismate from D-erythrose 4-phosphate and phosphoenolpyruvate: step 7/7. Catalyzes the anti-1,4-elimination of the C-3 phosphate and the C-6 proR hydrogen from 5-enolpyruvylshikimate-3-phosphate (EPSP) to yield chorismate, which is the branch point compound that serves as the starting substrate for the three terminal pathways of aromatic amino acid biosynthesis. This reaction introduces a second double bond into the aromatic ring system. The chain is Chorismate synthase from Streptococcus agalactiae serotype V (strain ATCC BAA-611 / 2603 V/R).